The primary structure comprises 456 residues: Elongator complex protein 4 (456 aa).

Over residues 1–11 (MSFRKRGEILN) the composition is skewed to basic and acidic residues. A disordered region spans residues 1–91 (MSFRKRGEIL…SQPTTSTGSA (91 aa)). Arginine 13 carries the omega-N-methylarginine modification. The segment covering 18–27 (RGPLLRGPPR) has biased composition (low complexity). The span at 57 to 66 (NIADESKTKM) shows a compositional bias: basic and acidic residues. Over residues 77–90 (PSPATSQPTTSTGS) the composition is skewed to low complexity. The residue at position 222 (serine 222) is a Phosphoserine. The tract at residues 424–444 (EGSAASEQSHSHSHSDEISHN) is disordered. Residues 432-442 (SHSHSHSDEIS) are compositionally biased toward basic and acidic residues.

This sequence belongs to the ELP4 family. As to quaternary structure, component of the elongator complex which consists of ELP1/IKI3, ELP2, ELP3, ELP4, ELP5/IKI1 and ELP6. The elongator complex is composed of two copies of the Elp123 subcomplex (composed of ELP1/IKI3, ELP2 and ELP3) and two copies of the Elp456 subcomplex (composed of ELP4, ELP5/IKI1 and ELP6). The Elp123 subcomplex forms a two-lobed scaffold, which binds the Elp456 subcomplex asymmetrically. In each lobe, ELP2 is tightly sandwiched between ELP1/IKI3 and ELP3. The Elp123 subcomplex binds tRNA through ELP1/IKI3 and ELP3 and can bind 2 tRNAs simultaneously. tRNA-binding by the Elp123 subcomplex induces conformational rearrangements which precisely position the targeted anticodon base in the active site. The Elp456 subcomplex binds tRNA and has ATPase activity. ELP4 interacts with KTI12.

The protein resides in the cytoplasm. It is found in the nucleus. Its pathway is tRNA modification; 5-methoxycarbonylmethyl-2-thiouridine-tRNA biosynthesis. Its function is as follows. Component of the elongator complex, a multiprotein complex which is required for multiple tRNA modifications, including mcm5U (5-methoxycarbonylmethyl uridine), mcm5s2U (5-methoxycarbonylmethyl-2-thiouridine), and ncm5U (5-carbamoylmethyl uridine). The elongator complex catalyzes formation of carboxymethyluridine in the wobble base at position 34 in tRNAs. It functions as a gamma-toxin target (TOT); disruption of the complex confers resistance to Kluyveromyces lactis toxin zymocin (pGKL1 killer toxin). May also be involved in sensitivity to Pichia inositovora toxin. In Saccharomyces cerevisiae (strain ATCC 204508 / S288c) (Baker's yeast), this protein is Elongator complex protein 4.